The sequence spans 217 residues: Probable transaldolase (217 aa).

Lys-83 serves as the catalytic Schiff-base intermediate with substrate.

Belongs to the transaldolase family. Type 3B subfamily.

It localises to the cytoplasm. It carries out the reaction D-sedoheptulose 7-phosphate + D-glyceraldehyde 3-phosphate = D-erythrose 4-phosphate + beta-D-fructose 6-phosphate. The protein operates within carbohydrate degradation; pentose phosphate pathway; D-glyceraldehyde 3-phosphate and beta-D-fructose 6-phosphate from D-ribose 5-phosphate and D-xylulose 5-phosphate (non-oxidative stage): step 2/3. In terms of biological role, transaldolase is important for the balance of metabolites in the pentose-phosphate pathway. This Dinoroseobacter shibae (strain DSM 16493 / NCIMB 14021 / DFL 12) protein is Probable transaldolase.